The primary structure comprises 237 residues: Ribonuclease PH (237 aa).

Phosphate is bound by residues arginine 86 and glycine 124–arginine 126.

This sequence belongs to the RNase PH family. Homohexameric ring arranged as a trimer of dimers.

The catalysed reaction is tRNA(n+1) + phosphate = tRNA(n) + a ribonucleoside 5'-diphosphate. Its function is as follows. Phosphorolytic 3'-5' exoribonuclease that plays an important role in tRNA 3'-end maturation. Removes nucleotide residues following the 3'-CCA terminus of tRNAs; can also add nucleotides to the ends of RNA molecules by using nucleoside diphosphates as substrates, but this may not be physiologically important. Probably plays a role in initiation of 16S rRNA degradation (leading to ribosome degradation) during starvation. The protein is Ribonuclease PH of Cereibacter sphaeroides (strain ATCC 17025 / ATH 2.4.3) (Rhodobacter sphaeroides).